The sequence spans 365 residues: Caffeic acid 3-O-methyltransferase (365 aa).

130-136 (MNQDKVL) is a binding site for substrate. Residues 162–180 (AFEYHGTDPRFNKVFNRGM) form a substrate binding region. Residues Gly-208, Asp-231, Asp-251, Met-252, and Lys-265 each coordinate S-adenosyl-L-methionine. The active-site Proton acceptor is His-269.

Belongs to the class I-like SAM-binding methyltransferase superfamily. Cation-independent O-methyltransferase family. COMT subfamily. In terms of assembly, homodimer.

The catalysed reaction is (E)-caffeate + S-adenosyl-L-methionine = (E)-ferulate + S-adenosyl-L-homocysteine + H(+). The protein operates within aromatic compound metabolism; phenylpropanoid biosynthesis. Its function is as follows. Catalyzes the conversion of caffeic acid to ferulic acid and of 5-hydroxyferulic acid to sinapic acid. The resulting products may subsequently be converted to the corresponding alcohols that are incorporated into lignins. The chain is Caffeic acid 3-O-methyltransferase (COMT1) from Prunus dulcis (Almond).